A 299-amino-acid chain; its full sequence is Large ribosomal subunit protein uL18 (299 aa).

This sequence belongs to the universal ribosomal protein uL18 family. Component of the large ribosomal subunit (LSU).

It localises to the cytoplasm. The protein resides in the nucleus. Its function is as follows. Component of the ribosome, a large ribonucleoprotein complex responsible for the synthesis of proteins in the cell. The small ribosomal subunit (SSU) binds messenger RNAs (mRNAs) and translates the encoded message by selecting cognate aminoacyl-transfer RNA (tRNA) molecules. The large subunit (LSU) contains the ribosomal catalytic site termed the peptidyl transferase center (PTC), which catalyzes the formation of peptide bonds, thereby polymerizing the amino acids delivered by tRNAs into a polypeptide chain. The nascent polypeptides leave the ribosome through a tunnel in the LSU and interact with protein factors that function in enzymatic processing, targeting, and the membrane insertion of nascent chains at the exit of the ribosomal tunnel. This chain is Large ribosomal subunit protein uL18 (RpL5), found in Bombyx mori (Silk moth).